A 428-amino-acid polypeptide reads, in one-letter code: Glucose-1-phosphate adenylyltransferase (428 aa).

Residues tyrosine 99, glycine 164, 179-180 (EK), and serine 190 each bind alpha-D-glucose 1-phosphate.

It belongs to the bacterial/plant glucose-1-phosphate adenylyltransferase family. As to quaternary structure, homotetramer.

It catalyses the reaction alpha-D-glucose 1-phosphate + ATP + H(+) = ADP-alpha-D-glucose + diphosphate. It functions in the pathway glycan biosynthesis; glycogen biosynthesis. Its function is as follows. Involved in the biosynthesis of ADP-glucose, a building block required for the elongation reactions to produce glycogen. Catalyzes the reaction between ATP and alpha-D-glucose 1-phosphate (G1P) to produce pyrophosphate and ADP-Glc. The chain is Glucose-1-phosphate adenylyltransferase from Thermomicrobium roseum (strain ATCC 27502 / DSM 5159 / P-2).